The primary structure comprises 94 residues: Cell division topological specificity factor (94 aa).

The protein belongs to the MinE family.

In terms of biological role, prevents the cell division inhibition by proteins MinC and MinD at internal division sites while permitting inhibition at polar sites. This ensures cell division at the proper site by restricting the formation of a division septum at the midpoint of the long axis of the cell. The protein is Cell division topological specificity factor of Synechococcus sp. (strain CC9311).